A 170-amino-acid polypeptide reads, in one-letter code: Putative pre-16S rRNA nuclease (170 aa).

Positions 1–25 are disordered; that stretch reads MVPAQHRPPDRPGDPAHDPGRGRRL. Over residues 7–21 the composition is skewed to basic and acidic residues; that stretch reads RPPDRPGDPAHDPGR.

It belongs to the YqgF nuclease family.

The protein localises to the cytoplasm. In terms of biological role, could be a nuclease involved in processing of the 5'-end of pre-16S rRNA. The chain is Putative pre-16S rRNA nuclease from Mycobacterium tuberculosis (strain ATCC 25177 / H37Ra).